We begin with the raw amino-acid sequence, 786 residues long: Cas scaffolding protein family member 4 (786 aa).

The SH3 domain occupies 11–73; it reads PKALLARALY…PANRLQILTE (63 aa). 2 positions are modified to phosphoserine: S200 and S249. The disordered stretch occupies residues 262-295; the sequence is SFAEESRPHALPSSSSTFYNPPSGRSRSLTPQLN. Over residues 273-295 the composition is skewed to polar residues; sequence PSSSSTFYNPPSGRSRSLTPQLN. Phosphoserine is present on S305. Disordered regions lie at residues 361–429 and 612–670; these read QAGK…SEES and IQPP…ERKP. The span at 364–373 shows a compositional bias: basic and acidic residues; it reads KELEKAKEVS. Over residues 374 to 391 the composition is skewed to polar residues; the sequence is ENSAGHNSSWFSRRTTSP. Phosphoserine occurs at positions 376 and 390. The segment covering 399 to 427 has biased composition (low complexity); the sequence is SGSSSDSRASIVSSCSTTSTDDSSSSSSE. The span at 630–642 shows a compositional bias: basic and acidic residues; sequence KQREDEHSSELLK.

This sequence belongs to the CAS family. Interacts (via SH3 domain) with PTK2/FAK1 (via C-terminus). Phosphorylated on tyrosines by SRC. Expressed abundantly in lung and spleen. Also highly expressed in ovarian and leukemia cell lines.

It is found in the cytoplasm. The protein localises to the cytoskeleton. It localises to the cell junction. Its subcellular location is the focal adhesion. Functionally, docking protein that plays a role in tyrosine kinase-based signaling related to cell adhesion and cell spreading. Regulates PTK2/FAK1 activity, focal adhesion integrity, and cell spreading. The protein is Cas scaffolding protein family member 4 (CASS4) of Homo sapiens (Human).